We begin with the raw amino-acid sequence, 244 residues long: MNPEEFKQALAQHEIALTAKQLAQFALYFQLLVTTNKQFNLTTITAEPEVYLKHFYDSLTPAFYVPALRDQPLTICDVGAGAGFPSIPLKIAFPQLQVTIVDSLNKRINFLNDLVQQLGLTGVKTFHDRAETFAGKKSAHRESYDIATARAVARLSVLSELCLPLVKIGGQMIALKAANASTETAEGTYAVQQLGGQIVQDEAFSLPVTADPRHIIVIDKKKPSPKRYPRKPGTPAKQPLTAPM.

S-adenosyl-L-methionine is bound by residues G79, F84, 130 to 131, and R150; that span reads AE. A disordered region spans residues 221–244; the sequence is KKPSPKRYPRKPGTPAKQPLTAPM.

The protein belongs to the methyltransferase superfamily. RNA methyltransferase RsmG family.

It is found in the cytoplasm. Specifically methylates the N7 position of a guanine in 16S rRNA. This chain is Ribosomal RNA small subunit methyltransferase G, found in Lactiplantibacillus plantarum (strain ATCC BAA-793 / NCIMB 8826 / WCFS1) (Lactobacillus plantarum).